The primary structure comprises 116 residues: Ribonuclease P protein component (116 aa).

This sequence belongs to the RnpA family. Consists of a catalytic RNA component (M1 or rnpB) and a protein subunit.

It catalyses the reaction Endonucleolytic cleavage of RNA, removing 5'-extranucleotides from tRNA precursor.. In terms of biological role, RNaseP catalyzes the removal of the 5'-leader sequence from pre-tRNA to produce the mature 5'-terminus. It can also cleave other RNA substrates such as 4.5S RNA. The protein component plays an auxiliary but essential role in vivo by binding to the 5'-leader sequence and broadening the substrate specificity of the ribozyme. This is Ribonuclease P protein component from Thermoanaerobacter pseudethanolicus (strain ATCC 33223 / 39E) (Clostridium thermohydrosulfuricum).